Consider the following 375-residue polypeptide: Protein GOLM2 (375 aa).

At 1-12 the chain is on the cytoplasmic side; sequence MVGFGANRRGGR. A helical; Signal-anchor for type II membrane protein transmembrane segment spans residues 13–33; the sequence is LPSFLLAALLLVIAVLAFNCW. The stretch at 34-198 forms a coiled coil; that stretch reads NAASRQAVLR…REQKATQRIQ (165 aa). At 34–375 the chain is on the lumenal side; it reads NAASRQAVLR…SKPRFGDGVL (342 aa). 3 disordered regions span residues 81 to 102, 193 to 327, and 342 to 375; these read LEQK…DGQV, ATQR…DSQN, and RAVG…DGVL. 2 stretches are compositionally biased toward basic and acidic residues: residues 193 to 204 and 350 to 375; these read ATQRIQSSKDAE and KQND…DGVL.

Belongs to the GOLM family.

The protein resides in the membrane. This chain is Protein GOLM2 (GOLM2), found in Gallus gallus (Chicken).